The primary structure comprises 75 residues: UPF0352 protein YejL (75 aa).

The protein belongs to the UPF0352 family.

This Shigella sonnei (strain Ss046) protein is UPF0352 protein YejL.